The chain runs to 291 residues: Protease HtpX homolog (291 aa).

A run of 2 helical transmembrane segments spans residues 11–31 (INTF…GLLA) and 34–54 (FLGM…ACVQ). His-140 is a Zn(2+) binding site. Residue Glu-141 is part of the active site. His-144 lines the Zn(2+) pocket. A run of 2 helical transmembrane segments spans residues 155-175 (IVFG…RALI) and 186-206 (AFSF…AMLV). Glu-215 is a Zn(2+) binding site.

Belongs to the peptidase M48B family. The cofactor is Zn(2+).

Its subcellular location is the cell membrane. This Tropheryma whipplei (strain Twist) (Whipple's bacillus) protein is Protease HtpX homolog.